Here is a 600-residue protein sequence, read N- to C-terminus: NADH-quinone oxidoreductase subunit C/D (600 aa).

The tract at residues 1–190 is NADH dehydrogenase I subunit C; it reads MVNNMTDLTA…SPFELTKAKQ (190 aa). Positions 214-600 are NADH dehydrogenase I subunit D; that stretch reads DFMFLNLGPN…IDFVMSDVDR (387 aa).

In the N-terminal section; belongs to the complex I 30 kDa subunit family. The protein in the C-terminal section; belongs to the complex I 49 kDa subunit family. As to quaternary structure, NDH-1 is composed of 13 different subunits. Subunits NuoB, CD, E, F, and G constitute the peripheral sector of the complex.

The protein resides in the cell inner membrane. It catalyses the reaction a quinone + NADH + 5 H(+)(in) = a quinol + NAD(+) + 4 H(+)(out). In terms of biological role, NDH-1 shuttles electrons from NADH, via FMN and iron-sulfur (Fe-S) centers, to quinones in the respiratory chain. The immediate electron acceptor for the enzyme in this species is believed to be ubiquinone. Couples the redox reaction to proton translocation (for every two electrons transferred, four hydrogen ions are translocated across the cytoplasmic membrane), and thus conserves the redox energy in a proton gradient. This chain is NADH-quinone oxidoreductase subunit C/D, found in Escherichia coli (strain K12 / DH10B).